Consider the following 1499-residue polypeptide: Rho GTPase-activating protein 35 (1499 aa).

Residues 1–266 (MMMARKQDVR…IPYFEALKQQ (266 aa)) form a has GTPase activity, required for proper localization region. GTP contacts are provided by residues Lys-28, 33-37 (IGKSC), Leu-52, Ser-56, 95-97 (EQT), 201-203 (KCD), and 229-231 (SAR). 4 consecutive FF domains span residues 270 to 327 (IATA…HIHR), 368 to 422 (KLLE…HLEK), 429 to 483 (RAEM…HQKQ), and 485 to 550 (IDRA…HIHF). Phosphotyrosine is present on Tyr-308. Ser-589 bears the Phosphoserine mark. The region spanning 592-767 (DLNIDRINLV…LLDSKRNLNL (176 aa)) is the pG1 pseudoGTPase domain. Phosphoserine occurs at positions 770 and 773. The pG2 pseudoGTPase domain maps to 783–947 (RIVMCLMCGD…FKDVVEKKNI (165 aa)). Phosphoserine occurs at positions 970, 975, 985, and 1072. Position 1087 is a phosphotyrosine (Tyr-1087). Tyr-1105 is subject to Phosphotyrosine; by ABL2 and PTK6. Over residues 1124–1141 (KAQSNGSGNGSDSEMDTS) the composition is skewed to polar residues. Residues 1124-1148 (KAQSNGSGNGSDSEMDTSSLERGRK) form a disordered region. Phosphoserine is present on residues Ser-1134, Ser-1142, Ser-1150, Ser-1176, Ser-1179, and Ser-1221. Residues 1177-1207 (VGSDDELGPIRKKEEDQASQGYKGDNAVIPY) are disordered. The segment at 1213 to 1236 (PRRRNILRSLRRNTKKPKPKPRPS) is required for phospholipid binding and regulation of the substrate preference. At Thr-1226 the chain carries Phosphothreonine. Ser-1236 carries the phosphoserine modification. The Rho-GAP domain maps to 1249 to 1436 (VPLTTVVTPE…LFIQQCPFFF (188 aa)). Residues 1446–1499 (GAAPGSPSAMAPTVPFLTSTPATSQPSPPQSPPPTPQSPMQPLLSSQLQAEHTL) form a disordered region. Residues 1448–1470 (APGSPSAMAPTVPFLTSTPATSQ) are compositionally biased toward low complexity. Residues 1471–1484 (PSPPQSPPPTPQSP) show a composition bias toward pro residues. Phosphoserine is present on residues Ser-1472 and Ser-1476. Position 1480 is a phosphothreonine (Thr-1480). A Phosphoserine modification is found at Ser-1483. Residues 1485 to 1499 (MQPLLSSQLQAEHTL) are compositionally biased toward low complexity.

Interacts with the general transcription factor GTF2I, the interaction sequesters GTF2I in the cytoplasm. Interacts with RASA1. Post-translationally, phosphorylation of Tyr-1105 by PTK6 promotes the association with RASA1, inactivating RHOA while activating RAS. Phosphorylation at Tyr-308 by PDGFRA inhibits binding to GTF2I. Phosphorylated by PRKCA at Ser-1221 and Thr-1226, induces relocalization from the cytoplasm to regions of plasma membrane ruffling and prevents the binding and substrate specificity regulation by phospholipids. In brain, phosphorylated by FYN and SRC. During focal adhesion formation, phosphorylated by MAPK1 and MAPK3 at the C-terminal region, probably at Ser-1451, Ser-1476, Thr-1480 and Ser-1483. Phosphorylation by MAPK1 and MAPK3 inhibits GAP function and localizes ARGHAP35 away from newly forming focal adhesions and stress fibers in cells spreading on fibronectin. Phosphorylation at Ser-1476 and Thr-1480 by GSK3B requires priming by MAPK and inhibits RhoGAP activity and modulates polarized cell migration. Expressed in the developing kidneys. Expressed in all regions of the mature nervous system (at protein level). Detected in neutrophils (at protein level).

Its subcellular location is the cytoplasm. The protein resides in the cytoskeleton. The protein localises to the cilium basal body. It is found in the nucleus. It localises to the cell membrane. Rho GTPase-activating protein (GAP). Binds several acidic phospholipids which inhibits the Rho GAP activity to promote the Rac GAP activity. This binding is inhibited by phosphorylation by PRKCA. Involved in cell differentiation as well as cell adhesion and migration, plays an important role in retinal tissue morphogenesis, neural tube fusion, midline fusion of the cerebral hemispheres and mammary gland branching morphogenesis. Transduces signals from p21-ras to the nucleus, acting via the ras GTPase-activating protein (GAP). Transduces SRC-dependent signals from cell-surface adhesion molecules, such as laminin, to promote neurite outgrowth. Regulates axon outgrowth, guidance and fasciculation. Modulates Rho GTPase-dependent F-actin polymerization, organization and assembly, is involved in polarized cell migration and in the positive regulation of ciliogenesis and cilia elongation. During mammary gland development, is required in both the epithelial and stromal compartments for ductal outgrowth. Represses transcription of the glucocorticoid receptor by binding to the cis-acting regulatory sequence 5'-GAGAAAAGAAACTGGAGAAACTC-3'; this function is however unclear and would need additional experimental evidences. In Mus musculus (Mouse), this protein is Rho GTPase-activating protein 35.